Reading from the N-terminus, the 488-residue chain is Neisserial heparin binding antigen (488 aa).

Residues 1-17 (MFKRSVIAMACIFALSA) form the signal peptide. Cysteine 18 is lipidated: N-palmitoyl cysteine. Cysteine 18 is lipidated: S-diacylglycerol cysteine. The segment at 21 to 201 (GGGGSPDVKS…NPAPANGGSN (181 aa)) is disordered. Residues 43-53 (SEKETEAKEDA) are compositionally biased toward basic and acidic residues. Residues 54 to 70 (PQAGSQGQGAPSAQGSQ) show a composition bias toward low complexity. Composition is skewed to polar residues over residues 101-118 (DMPQ…NHTP) and 127-142 (MENQ…QPAN). Over residues 160-183 (AGGQNAGNTAAQGANQAGNNQAAG) the composition is skewed to low complexity. The Arg-rich motif signature appears at 296 to 306 (RFRRSARSRRS). Residues 306–488 (SLPAEMPLIP…GVFAGKKEQD (183 aa)) are C1 fragment.

It belongs to the NHBA family. The C-terminal beta-barrel forms a monomer. In terms of processing, cleaved in vivo by the Neisserial phase-variable autotransporter/serine protease NalP to give 2 fragments. The N-terminus remains in the cell outer membrane while the 22 kDa C-terminus (beginning on Ser-293) is soluble; this soluble fragment is called C2. Cleaved in vitro by human lactoferrin (LTF, between Arg-305 and Ser-306), this fragment is called C1. Cleavage by NalP or lactoferrin does not alter killing of Neisseria by bactericidal antibodies in vitro. Recombinant and cell surface protein is cleaved by human saliva kallikrein (KLK1) between Ser-303 and Arg-304; in saliva kallikrein is more active on NHBA than lactoferrin. Human plasma kallikrein (KLKB1) cleaves in a similar manner to KLK1.

The protein localises to the cell outer membrane. It localises to the cell surface. Its subcellular location is the host mitochondrion. Its function is as follows. A major human immunogenic protein detected in patients recovering from meningitidis, where it induces bactericidal antibodies. Binds heparin and heparan sulfate proteoglycan in vitro via the Arg-rich motif. Heparin-binding to this protein protects bacteria against killing by bactericidal antibodies (serum killing). Binds to human cells via the Arg-rich region; binding may require the intact protein as protein fragments do not bind to human cells. Protein binding to human cells is abolished by treatment with heparinase III but not chondroitinase ABC. The bacteria binds a number of human extracellular sialyated and/or sulfated glycans via this protein, including chondroitin sulfate (KD=5.2 nM), heparin (KD=52 nM) and ganglioside GT3 (KD=210 nM). The recombinant protein binds DNA non-specifically. In terms of biological role, plays a role in extracellular-DNA (eDNA) mediated biofilm formation. In strain MC58 eDNA stimulates biofilm formation. When NHBA is not processed by NalP there is an increase in positively charged, NHBA- and IgA-derived DNA-binding peptides on the cell surface, resulting in increased DNA-binding peptides and increased biofilm formation. Functionally, [C2 fragment] Localizes to host mitochondria when applied to the apical side of human endothelial cell layers, where it induces production of reactive oxygen species which lead to increased permeability of host endothelial cells. The C1 fragment (which lacks the first 14 residues of C2) does not have this effect. It is not known if this occurs during Neisseria infections. The polypeptide is Neisserial heparin binding antigen (Neisseria meningitidis serogroup B (strain ATCC BAA-335 / MC58)).